The primary structure comprises 668 residues: Potassium voltage-gated channel subfamily KQT member 1 (668 aa).

Topologically, residues 1-119 are cytoplasmic; that stretch reads MDTASSPPSA…YNFLERPTGW (119 aa). S27 is subject to Phosphoserine; by PKA. Residues 120–141 form a helical membrane-spanning segment; the sequence is KCFVYHFTVFLIVLVCLIFSVL. At 142-152 the chain is on the extracellular side; the sequence is STIEQYAALAT. A helical transmembrane segment spans residues 153–175; it reads GTLFWMEIVLVVFFGTEYVVRLW. The Cytoplasmic segment spans residues 176–191; it reads SAGCRSKYVGIWGRLR. A helical membrane pass occupies residues 192 to 217; the sequence is FARKPISIIDLIVVVASMVVLCVGSK. The Extracellular portion of the chain corresponds to 218 to 225; it reads GQVFATSA. Residues 226 to 241 traverse the membrane as a helical; Voltage-sensor segment; it reads IRGIRFLQILRMLHVD. An interaction with KCNE3 region spans residues 237–245; the sequence is MLHVDRQGG. Residues 242 to 259 lie on the Cytoplasmic side of the membrane; sequence RQGGTWRLLGSVVFIHRQ. Q243 contributes to the a 1,2-diacyl-sn-glycero-3-phospho-(1D-myo-inositol-4,5-bisphosphate) binding site. The helical transmembrane segment at 260–282 threads the bilayer; it reads ELITTLYIGFLGLIFSSYFVYLA. At 283-298 the chain is on the extracellular side; sequence EKDAVNESGRIEFGSY. N288 carries an N-linked (GlcNAc...) asparagine glycan. The segment at residues 299–319 is an intramembrane region (pore-forming); the sequence is ADALWWGVVTVTTIGYGDKVP. The Extracellular portion of the chain corresponds to 320–321; the sequence is QT. The chain crosses the membrane as a helical span at residues 322 to 347; sequence WVGKTIASCFSVFAISFFALPAGILG. The Cytoplasmic portion of the chain corresponds to 348–668; the sequence is SGFALKVQQK…VPQTGPDEGS (321 aa). The tract at residues 369-381 is interaction with CALM; sequence AAASLIQTAWRCY. 2 positions are modified to phosphoserine: S406 and S408. The interval 514–528 is interaction with CALM; calcium-dependent; that stretch reads KVIRRMQYFVAKKKF. The tract at residues 534–571 is interaction with KCNE1 C-terminus; that stretch reads PYDVRDVIEQYSQGHLNLMVRIKELQRRLDQSIGKPSL. Residues 584 to 620 are a coiled coil; it reads SNTIGARLNRVEDKVTQLDQRLVIITDMLHQLLSMQQ. The tract at residues 587–615 is interaction with AKAP9; it reads IGARLNRVEDKVTQLDQRLVIITDMLHQL. The tract at residues 588 to 619 is C-terminal assembly domain (tetramerization); that stretch reads GARLNRVEDKVTQLDQRLVIITDMLHQLLSMQ.

It belongs to the potassium channel family. KQT (TC 1.A.1.15) subfamily. Kv7.1/KCNQ1 sub-subfamily. As to quaternary structure, tetramer. Heterotetramer with KCNE1; form the native cardiac channel I(Ks) which increases the amplitude and slows down the activation kinetics of outward potassium current and targets to the membrane raft. Interacts (via C-terminus) with CALM; forms a heterooctameric structure (with 4:4 KCNQ1:CALM stoichiometry) in a calcium-independent manner. Interacts with AKAP9; targets protein kinase A (PKA) catalytic and regulatory subunits and protein phosphatase 1 (PP1) to the KCNQ1-KCNE1 complex, allowing PKA-mediated phosphorylation and increase of delayed rectifier potassium channel activity. Interacts with KCNE2; form an heterooligomer complex that targets to the membrane raft and leading to currents with an apparently instantaneous activation, a rapid deactivation process and a linear current-voltage relationship and decreases the amplitude of the outward current. Interacts with AP2M1; mediates estrogen-induced internalization via clathrin-coated vesicles. Interacts with NEDD4L; promotes internalization and decreases I(Ks) currents. Interacts with USP2; counteracts the NEDD4L-specific down-regulation of I(Ks) and restore plasma membrane localization. Heterotetramer with KCNQ5; has a voltage-gated potassium channel activity. Interacts with KCNE3; four KCNE3 molecules are bound to one KCNQ1 tetramer (4:4 KCNQ1:KCNE3 stoichiometry); alters membrane raft localization; affects KCNQ1 structure and gating properties. Interacts with KCNE4; impairs KCNQ1 localization in lipid rafts and inhibits voltage-gated potassium channel activity. Interacts with KCNE5; impairs KCNQ1 localization in lipid rafts and only conducts current upon strong and continued depolarization. Interacts with SLC5A3; forms coregulatory channel-transporter complexes that modulate Na(+)-coupled myo-inositol influx through the transporter. In terms of processing, phosphorylation at Ser-27 by PKA; increases delayed rectifier potassium channel activity of the KCNQ1-KCNE1 complex through a macromolecular complex that includes PKA, PP1, and the targeting protein AKAP9. Ubiquitinated by NEDD4L; promotes internalization. The ubiquitinylated form is internalized through a clathrin-mediated endocytosis by interacting with AP2M1 and is recycled back to the cell membrane via RAB4A and RAB11A. Post-translationally, deubiquitinated by USP2; counteracts the NEDD4L-specific down-regulation of I(Ks) and restores the membrane localization. Expressed in heart, kidney and salivary glands. Detected in the cochlea. Almost undetectable in brain, skeletal muscle and liver. Widely expressed in embryonic and neonatal tissues. Expressed in choroid plexus epithelium (at protein level).

The protein localises to the cell membrane. The protein resides in the cytoplasmic vesicle membrane. It localises to the early endosome. Its subcellular location is the membrane raft. It is found in the endoplasmic reticulum. The protein localises to the basolateral cell membrane. The protein resides in the apical cell membrane. The catalysed reaction is K(+)(in) = K(+)(out). Its activity is regulated as follows. PIP2 molecule is essential to activate KCNQ channels by inducing the coupling of the voltage-sensing domain (VSD) and the pore-forming domain (PD). Upon channel activation, PIP2 disrupts the VSD-calmodulin/CALM interactions, causing the release of CALM from the VSD which triggers the opening of the gate. Calcium potentiates KCNQ1 channel current through calcium-bound CALM. Calcium-bound CALM competes with PIP2 to stabilize the channel open state. Pore-forming subunit of the voltage-gated potassium (Kv) channel involved in the regulation of cardiomyocyte excitability and important in normal development and functions of myocardium, inner ear, stomach and colon. Associates with KCNE beta subunits that modulates current kinetics. Induces a voltage-dependent by rapidly activating and slowly deactivating potassium-selective outward current. Also promotes a delayed voltage activated potassium current showing outward rectification characteristic. During beta-adrenergic receptor stimulation participates in cardiac increases the amplitude and slows down the activation kinetics of outward potassium current I(Ks). Muscarinic agonist oxotremorine-M strongly suppresses KCNQ1/KCNE1 current. When associated with KCNE3, forms the potassium channel that is important for cyclic AMP-stimulated intestinal secretion of chloride ions. This interaction with KCNE3 is reduced by 17beta-estradiol, resulting in the reduction of currents. During conditions of increased substrate load, maintains the driving force for proximal tubular and intestinal sodium ions absorption, gastric acid secretion, and cAMP-induced jejunal chloride ions secretion. Allows the provision of potassium ions to the luminal membrane of the secretory canaliculus in the resting state as well as during stimulated acid secretion. When associated with KCNE2, forms a heterooligomer complex leading to currents with an apparently instantaneous activation, a rapid deactivation process and a linear current-voltage relationship and decreases the amplitude of the outward current. When associated with KCNE4, inhibits voltage-gated potassium channel activity. When associated with KCNE5, this complex only conducts current upon strong and continued depolarization. Also forms a heterotetramer with KCNQ5; has a voltage-gated potassium channel activity. Binds with phosphatidylinositol 4,5-bisphosphate. KCNQ1-KCNE2 channel associates with Na(+)-coupled myo-inositol symporter in the apical membrane of choroid plexus epithelium and regulates the myo-inositol gradient between blood and cerebrospinal fluid with an impact on neuron excitability. The protein is Potassium voltage-gated channel subfamily KQT member 1 of Mus musculus (Mouse).